Reading from the N-terminus, the 288-residue chain is ATP phosphoribosyltransferase (288 aa).

Belongs to the ATP phosphoribosyltransferase family. Long subfamily. Mg(2+) is required as a cofactor.

It localises to the cytoplasm. It carries out the reaction 1-(5-phospho-beta-D-ribosyl)-ATP + diphosphate = 5-phospho-alpha-D-ribose 1-diphosphate + ATP. The protein operates within amino-acid biosynthesis; L-histidine biosynthesis; L-histidine from 5-phospho-alpha-D-ribose 1-diphosphate: step 1/9. With respect to regulation, feedback inhibited by histidine. In terms of biological role, catalyzes the condensation of ATP and 5-phosphoribose 1-diphosphate to form N'-(5'-phosphoribosyl)-ATP (PR-ATP). Has a crucial role in the pathway because the rate of histidine biosynthesis seems to be controlled primarily by regulation of HisG enzymatic activity. The chain is ATP phosphoribosyltransferase from Methanococcus maripaludis (strain C6 / ATCC BAA-1332).